The primary structure comprises 257 residues: Putative hydro-lyase Bcenmc03_3969 (257 aa).

This sequence belongs to the D-glutamate cyclase family.

The protein is Putative hydro-lyase Bcenmc03_3969 of Burkholderia orbicola (strain MC0-3).